Consider the following 283-residue polypeptide: Protease HtpX (283 aa).

Helical transmembrane passes span 4–24 (IALFLATNFAVMIVLGIILSV) and 33–53 (GGILIMSVLFGFAGSLISLFM). Histidine 139 serves as a coordination point for Zn(2+). The active site involves glutamate 140. Position 143 (histidine 143) interacts with Zn(2+). The next 2 helical transmembrane spans lie at 147–167 (GDMVTMTLLQGVLNTFVIFLS) and 192–212 (FLVSMVLEILFGVLATIIAMW). Position 218 (glutamate 218) interacts with Zn(2+).

Belongs to the peptidase M48B family. Requires Zn(2+) as cofactor.

The protein resides in the cell inner membrane. This is Protease HtpX from Glaesserella parasuis serovar 5 (strain SH0165) (Haemophilus parasuis).